A 227-amino-acid chain; its full sequence is MEALKKIAGVTAAQYVTDGMTIGLGTGSTAYYFVEEIGRRVKQEGLQVVGVTTSSVTSKQAEVLGIPLKSIDDIDSIDLTVDGADEVDKNFNGIKGGGAALLMEKIVATPTKEYIWVVDASKMVEHLGAFKLPVEVVQYGADRLFRVFEKAGYKPSFRMKGDSRLVTDMQNYIIDLDLGCIKDPVAFGHLLDGTVGVVEHGLFNGMVDKVIVASKDGVTVLEAPTAG.

Substrate is bound by residues 26–29 (TGST), 82–85 (DGAD), and 95–98 (KGGG). Residue Glu-104 is the Proton acceptor of the active site. A substrate-binding site is contributed by Lys-122.

The protein belongs to the ribose 5-phosphate isomerase family. As to quaternary structure, homodimer.

It carries out the reaction aldehydo-D-ribose 5-phosphate = D-ribulose 5-phosphate. It participates in carbohydrate degradation; pentose phosphate pathway; D-ribose 5-phosphate from D-ribulose 5-phosphate (non-oxidative stage): step 1/1. Catalyzes the reversible conversion of ribose-5-phosphate to ribulose 5-phosphate. In Streptococcus pyogenes serotype M1, this protein is Ribose-5-phosphate isomerase A.